The sequence spans 241 residues: MPDYEKQKRNAAVEAASYVKTGMVIGIGTGTTARYLIEELGRRVSEENLKIKGVCTSKKSEELARAAGIEISENPEQIIDLTIDGADQVNLHGTLIKGGGGALLREKIVAYNSKEMYVIVDSRKIDDENFGSFPLPVEVVPFLHRMTLENLRKICPSTDLRKNSDGTLFITDNGNYIADMKFGRIRETNELEKKIKSIPGVVDVGLFNNIADKIFEGNDDGCNIYVVSEKGRIEKEKGQFK.

Substrate-binding positions include 29–32 (TGTT), 84–87 (DGAD), and 97–100 (KGGG). The active-site Proton acceptor is Glu-106. Residue Lys-124 coordinates substrate.

Belongs to the ribose 5-phosphate isomerase family. In terms of assembly, homodimer.

The catalysed reaction is aldehydo-D-ribose 5-phosphate = D-ribulose 5-phosphate. It participates in carbohydrate degradation; pentose phosphate pathway; D-ribose 5-phosphate from D-ribulose 5-phosphate (non-oxidative stage): step 1/1. Functionally, catalyzes the reversible conversion of ribose-5-phosphate to ribulose 5-phosphate. This chain is Ribose-5-phosphate isomerase A, found in Thermoplasma volcanium (strain ATCC 51530 / DSM 4299 / JCM 9571 / NBRC 15438 / GSS1).